We begin with the raw amino-acid sequence, 155 residues long: Sweet protein mabinlin-2 (155 aa).

A signal peptide spans 1–20 (MAKLIFLFATLALFVLLANA). A propeptide spanning residues 21–35 (SIQTTVIEVDEEEDN) is cleaved from the precursor. At glutamine 36 the chain carries Pyrrolidone carboxylic acid. Intrachain disulfides connect cysteine 40/cysteine 103, cysteine 53/cysteine 92, cysteine 93/cysteine 141, and cysteine 105/cysteine 149. The disordered stretch occupies residues 64–86 (GGQPDELEDEVEDDNDDENQPRR). Acidic residues predominate over residues 68–81 (DELEDEVEDDNDDE). Residues 69-82 (ELEDEVEDDNDDEN) constitute a propeptide that is removed on maturation. Glutamine 83 is modified (pyrrolidone carboxylic acid). A propeptide is located at residue proline 155.

This sequence belongs to the 2S seed storage albumins family. As to quaternary structure, heterodimer of a small A and a large B chain linked by disulfide bonds.

Heat stable 2S seed storage protein having sweetness-inducing activity. This Capparis masaikai (Mabinlang) protein is Sweet protein mabinlin-2.